The sequence spans 93 residues: Cobalt transport protein CbiN (93 aa).

The next 2 helical transmembrane spans lie at 5–25 (LMLLAMVVALVILPFFINHGG) and 63–83 (LLFTLQGSLGAAVIFYILGYC).

It belongs to the CbiN family. In terms of assembly, forms an energy-coupling factor (ECF) transporter complex composed of an ATP-binding protein (A component, CbiO), a transmembrane protein (T component, CbiQ) and 2 possible substrate-capture proteins (S components, CbiM and CbiN) of unknown stoichimetry.

It localises to the cell inner membrane. It participates in cofactor biosynthesis; adenosylcobalamin biosynthesis. Part of the energy-coupling factor (ECF) transporter complex CbiMNOQ involved in cobalt import. This is Cobalt transport protein CbiN from Salmonella agona (strain SL483).